A 176-amino-acid polypeptide reads, in one-letter code: MSEKTIAIKAQKVEEIADQFKNAASAVVVDARGLTVAQSTELRHQLREEGIVLEVIKNKILTRAAEKAGFAELNDIFAGPSAVAFSNDDAVAPSRILKKFADANEKLEIKGGVVDGTIANIEDINKYASLPSREGLLGQLMAEFQFSIRSFAYAVKAVQDKLEEGGEAAEEALAAE.

The protein belongs to the universal ribosomal protein uL10 family. As to quaternary structure, part of the ribosomal stalk of the 50S ribosomal subunit. The N-terminus interacts with L11 and the large rRNA to form the base of the stalk. The C-terminus forms an elongated spine to which L12 dimers bind in a sequential fashion forming a multimeric L10(L12)X complex.

Its function is as follows. Forms part of the ribosomal stalk, playing a central role in the interaction of the ribosome with GTP-bound translation factors. This is Large ribosomal subunit protein uL10 from Leuconostoc citreum (strain KM20).